Consider the following 92-residue polypeptide: UPF0223 protein SPCG_1392 (92 aa).

The protein belongs to the UPF0223 family.

The protein is UPF0223 protein SPCG_1392 of Streptococcus pneumoniae (strain CGSP14).